Here is a 615-residue protein sequence, read N- to C-terminus: Probable inactive purple acid phosphatase 24 (615 aa).

Residues 1–26 (MARVLGVLLCLLALFSSSLCLDHANG) form the signal peptide. 3 N-linked (GlcNAc...) asparagine glycosylation sites follow: Asn-129, Asn-267, and Asn-275. Asp-297 is a binding site for Fe cation. Residue Asn-318 is glycosylated (N-linked (GlcNAc...) asparagine). Residues Asp-338 and Tyr-341 each coordinate Fe cation. Asp-338 is a binding site for Zn(2+). Zn(2+) is bound by residues Asn-371, His-460, and His-502. Asn-371 contributes to the substrate binding site. Position 502 to 504 (502 to 504 (HVH)) interacts with substrate. His-504 contacts Fe cation. Asn-592 is a glycosylation site (N-linked (GlcNAc...) asparagine).

Belongs to the metallophosphoesterase superfamily. Purple acid phosphatase family. In terms of assembly, homodimer. It depends on Fe cation as a cofactor. Zn(2+) serves as cofactor. As to expression, specifically expressed in flowers.

The protein resides in the secreted. The protein is Probable inactive purple acid phosphatase 24 (PAP24) of Arabidopsis thaliana (Mouse-ear cress).